The sequence spans 344 residues: MATPGALAKFRLPPLPTIGEIVKLFNLRAEKQLSQNFLLDLKLTDKIVRRAGNLQNAYVCEVGPGPGGITRSILNAGVEELLVVEKDTRFIPGLKMLNEASGGKVRTVHGDILTYRMDRAFPKHLIKSWDDEPPNVHIIGNLPFSVSTPLIIKWLEQVADRTGPFTYGRTQMTLTFQQEVAERLTASTKNKQRSRLSIMSQYLCNVKNCFTIPGRAFIPKPKVDVGVVHLTPFVQPKIEQPFKLVEKVVRCIFQFRRKYCHHGVSILFPEEIRIQLTEQMLRLADVDPTLRPTELTMTHFKKLCNVYREMCDQNPHLFSYNYREELRMKKLQGKSTEEEDDLLQ.

The transit peptide at 1–27 directs the protein to the mitochondrion; that stretch reads MATPGALAKFRLPPLPTIGEIVKLFNL. S-adenosyl-L-methionine is bound by residues asparagine 36, leucine 38, glycine 63, glutamate 85, lysine 86, aspartate 111, isoleucine 112, and asparagine 141.

It belongs to the class I-like SAM-binding methyltransferase superfamily. rRNA adenine N(6)-methyltransferase family. KsgA subfamily.

It is found in the mitochondrion. It catalyses the reaction adenosine(N)/adenosine(N+1) in rRNA + 4 S-adenosyl-L-methionine = N(6)-dimethyladenosine(N)/N(6)-dimethyladenosine(N+1) in rRNA + 4 S-adenosyl-L-homocysteine + 4 H(+). Functionally, mitochondrial methyltransferase which uses S-adenosyl methionine to dimethylate two highly conserved adjacent adenosine residues (A1583 and A1584) within the loop of helix 45 at the 3-prime end of 12S rRNA, thereby regulating the assembly or stability of the small subunit of the mitochondrial ribosome. Also required for basal transcription of mitochondrial DNA, probably via its interaction with POLRMT and TFAM. Stimulates transcription independently of the methyltransferase activity. The sequence is that of Dimethyladenosine transferase 1, mitochondrial (tfb1m.L) from Xenopus laevis (African clawed frog).